A 956-amino-acid chain; its full sequence is Lon protease homolog, mitochondrial 1 (956 aa).

2 disordered regions span residues 37–57 and 83–123; these read NNNNNNNNNNNNNNNNNNNNN and KKKG…GNEK. Positions 91–123 are enriched in basic and acidic residues; the sequence is NNDDNDNEKNEKNEKKVKNEKKEKNEKNDGNEK. The Lon N-terminal domain maps to 159-357; sequence VVIYPSNSVN…MLYHMILNEQ (199 aa). 511-518 contributes to the ATP binding site; sequence GPPGTGKT. One can recognise a Lon proteolytic domain in the interval 747–945; the sequence is VTPIGVVNGL…KDVFEVAFPN (199 aa). Residues 777 to 795 show a composition bias toward low complexity; it reads KPLSSLPPSQQQQNQLEPS. Residues 777–800 are disordered; the sequence is KPLSSLPPSQQQQNQLEPSIKTTG. Active-site residues include serine 851 and lysine 894.

The protein belongs to the peptidase S16 family. In terms of assembly, homohexamer or homoheptamer. Organized in a ring with a central cavity.

It localises to the mitochondrion matrix. It catalyses the reaction Hydrolysis of proteins in presence of ATP.. Functionally, ATP-dependent serine protease that mediates the selective degradation of misfolded, unassembled or oxidatively damaged polypeptides as well as certain short-lived regulatory proteins in the mitochondrial matrix. May also have a chaperone function in the assembly of inner membrane protein complexes. Participates in the regulation of mitochondrial gene expression and in the maintenance of the integrity of the mitochondrial genome. Binds to mitochondrial DNA in a site-specific manner. This Dictyostelium discoideum (Social amoeba) protein is Lon protease homolog, mitochondrial 1.